Consider the following 882-residue polypeptide: Envelope glycoprotein gp160 (882 aa).

A signal peptide spans 1-22; sequence MGCLGNQLLIAILLLSVYGIYC. Residues 23–697 are Extracellular-facing; that stretch reads IQYVTVFYGV…TSWIKYIQYG (675 aa). N-linked (GlcNAc...) asparagine; by host glycosylation occurs at N37. C44 and C57 are disulfide-bonded. Residues N70, N114, N149, N159, N174, N187, N201, N205, N215, N247, N250, N257, N281, N287, N298, N309, N319, N374, and N380 are each glycosylated (N-linked (GlcNAc...) asparagine; by host). Cystine bridges form between C101–C223, C108–C214, C113–C171, C236–C266, and C246–C258. A V1 region spans residues 113-170; sequence CNKSETDKWGLTKSSTTTASTTTTTTAKSVETRDIVNETSPCVVHDNCTGLEQEPMIS. Residues 171-214 form a V2 region; sequence CKFNMTGLKRDKKKEYNETWYSADLVCEQGNSTGNESRCYMNHC. Positions 314–346 are V3; sequence CRRPGNKTVLPVTIMSALVFHSQPVNERPKQAW. Residues C314 and C347 are joined by a disulfide bond. 2 cysteine pairs are disulfide-bonded: C398-C462 and C405-C435. The interval 405-435 is V4; that stretch reads CKMNWFLNWVEDRSLTTQKPKERHKRNYVPC. Residues N463, N474, and N479 are each glycosylated (N-linked (GlcNAc...) asparagine; by host). Residues 478 to 485 form a V5 region; sequence GNQTSITM. Residues 529–549 are fusion peptide; it reads GVFVLGFLGFLATAGSAMGAA. The interval 592–608 is immunosuppression; sequence LQTRVSAIEKYLKDQAQ. 3 N-linked (GlcNAc...) asparagine; by host glycosylation sites follow: N628, N637, and N653. Residues 637 to 669 adopt a coiled-coil conformation; that stretch reads NETWQEWERKVDFLEANITALLEEAQIQQEKNM. The interval 674–695 is MPER; binding to GalCer; sequence KLNSWDVFGNWFDLTSWIKYIQ. Residues 698–718 traverse the membrane as a helical segment; it reads IYIIVGVILLRIVIYIVQMLA. At 719 to 882 the chain is on the cytoplasmic side; it reads RLRQGYRPVF…IRQGLELTLL (164 aa). The YXXV motif; contains endocytosis signal signature appears at 724–727; that stretch reads YRPV. Residues 738–761 are disordered; it reads THTQQDPALPTKEGKKGDGGGSGG. A lipid anchor (S-palmitoyl cysteine; by host) is attached at C790. The Di-leucine internalization motif motif lies at 881–882; that stretch reads LL.

In terms of assembly, the mature envelope protein (Env) consists of a homotrimer of non-covalently associated gp120-gp41 heterodimers. The resulting complex protrudes from the virus surface as a spike. Interacts with host CD4 and CCR5. Gp120 also interacts with the C-type lectins CD209/DC-SIGN and CLEC4M/DC-SIGNR (collectively referred to as DC-SIGN(R)). As to quaternary structure, the mature envelope protein (Env) consists of a homotrimer of non-covalently associated gp120-gp41 heterodimers. The resulting complex protrudes from the virus surface as a spike. In terms of processing, specific enzymatic cleavages in vivo yield mature proteins. Envelope glycoproteins are synthesized as an inactive precursor that is heavily N-glycosylated and processed likely by host cell furin in the Golgi to yield the mature SU and TM proteins. The cleavage site between SU and TM requires the minimal sequence [KR]-X-[KR]-R. Palmitoylation of the transmembrane protein and of Env polyprotein (prior to its proteolytic cleavage) is essential for their association with host cell membrane lipid rafts. Palmitoylation is therefore required for envelope trafficking to classical lipid rafts, but not for viral replication.

It is found in the virion membrane. It localises to the host cell membrane. The protein resides in the host endosome membrane. Functionally, the surface protein gp120 (SU) attaches the virus to the host lymphoid cell by binding to the primary receptor CD4. This interaction induces a structural rearrangement creating a high affinity binding site for a chemokine coreceptor like CCR5. This peculiar 2 stage receptor-interaction strategy allows gp120 to maintain the highly conserved coreceptor-binding site in a cryptic conformation, protected from neutralizing antibodies. These changes are transmitted to the transmembrane protein gp41 and are thought to activate its fusogenic potential by unmasking its fusion peptide. Its function is as follows. Surface protein gp120 (SU) may target the virus to gut-associated lymphoid tissue (GALT) by binding host ITGA4/ITGB7 (alpha-4/beta-7 integrins), a complex that mediates T-cell migration to the GALT. Interaction between gp120 and ITGA4/ITGB7 would allow the virus to enter GALT early in the infection, infecting and killing most of GALT's resting CD4+ T-cells. This T-cell depletion is believed to be the major insult to the host immune system leading to AIDS. In terms of biological role, the surface protein gp120 is a ligand for CD209/DC-SIGN and CLEC4M/DC-SIGNR, which are respectively found on dendritic cells (DCs), and on endothelial cells of liver sinusoids and lymph node sinuses. These interactions allow capture of viral particles at mucosal surfaces by these cells and subsequent transmission to permissive cells. DCs are professional antigen presenting cells, critical for host immunity by inducing specific immune responses against a broad variety of pathogens. They act as sentinels in various tissues where they take up antigen, process it, and present it to T-cells following migration to lymphoid organs. SIV subverts the migration properties of dendritic cells to gain access to CD4+ T-cells in lymph nodes. Virus transmission to permissive T-cells occurs either in trans (without DCs infection, through viral capture and transmission), or in cis (following DCs productive infection, through the usual CD4-gp120 interaction), thereby inducing a robust infection. In trans infection, bound virions remain infectious over days and it is proposed that they are not degraded, but protected in non-lysosomal acidic organelles within the DCs close to the cell membrane thus contributing to the viral infectious potential during DCs' migration from the periphery to the lymphoid tissues. On arrival at lymphoid tissues, intact virions recycle back to DCs' cell surface allowing virus transmission to CD4+ T-cells. Virion capture also seems to lead to MHC-II-restricted viral antigen presentation, and probably to the activation of SIV-specific CD4+ cells. The transmembrane protein gp41 (TM) acts as a class I viral fusion protein. Under the current model, the protein has at least 3 conformational states: pre-fusion native state, pre-hairpin intermediate state, and post-fusion hairpin state. During fusion of viral and target intracellular membranes, the coiled coil regions (heptad repeats) assume a trimer-of-hairpins structure, positioning the fusion peptide in close proximity to the C-terminal region of the ectodomain. The formation of this structure appears to drive apposition and subsequent fusion of viral and target cell membranes. Complete fusion occurs in host cell endosomes. The virus undergoes clathrin-dependent internalization long before endosomal fusion, thus minimizing the surface exposure of conserved viral epitopes during fusion and reducing the efficacy of inhibitors targeting these epitopes. Membranes fusion leads to delivery of the nucleocapsid into the cytoplasm. Functionally, the envelope glycoprotein gp160 precursor down-modulates cell surface CD4 antigen by interacting with it in the endoplasmic reticulum and blocking its transport to the cell surface. Its function is as follows. The gp120-gp41 heterodimer allows rapid transcytosis of the virus through CD4 negative cells such as simple epithelial monolayers of the intestinal, rectal and endocervical epithelial barriers. Both gp120 and gp41 specifically recognize glycosphingolipids galactosyl-ceramide (GalCer) or 3' sulfo-galactosyl-ceramide (GalS) present in the lipid rafts structures of epithelial cells. Binding to these alternative receptors allows the rapid transcytosis of the virus through the epithelial cells. This transcytotic vesicle-mediated transport of virions from the apical side to the basolateral side of the epithelial cells does not involve infection of the cells themselves. The polypeptide is Envelope glycoprotein gp160 (env) (Simian immunodeficiency virus (isolate Mm142-83) (SIV-mac)).